We begin with the raw amino-acid sequence, 375 residues long: RING-H2 finger protein ATL16 (375 aa).

Residues 1–20 form a disordered region; it reads MDLSNRRNPLRDLSFPPPPP. Residues 39-59 traverse the membrane as a helical segment; sequence VAVIGILATAFLLVSYYVFVI. The RING-type; atypical zinc finger occupies 138–180; sequence CSVCLSEFQDEEKLRIIPNCSHLFHIDCIDVWLQNNANCPLCR. Disordered stretches follow at residues 223-266 and 356-375; these read GSDR…DRGG and SFGS…YFEP. The span at 238-257 shows a compositional bias: polar residues; the sequence is QERSNSGYLLNENTQNSISP.

It belongs to the RING-type zinc finger family. ATL subfamily.

The protein resides in the membrane. The enzyme catalyses S-ubiquitinyl-[E2 ubiquitin-conjugating enzyme]-L-cysteine + [acceptor protein]-L-lysine = [E2 ubiquitin-conjugating enzyme]-L-cysteine + N(6)-ubiquitinyl-[acceptor protein]-L-lysine.. It participates in protein modification; protein ubiquitination. The polypeptide is RING-H2 finger protein ATL16 (ATL16) (Arabidopsis thaliana (Mouse-ear cress)).